A 167-amino-acid polypeptide reads, in one-letter code: uncharacterized protein (167 aa).

It belongs to the A.longa ORF167/ORF288 family.

Its subcellular location is the plastid. This is an uncharacterized protein from Euglena longa (Euglenophycean alga).